Reading from the N-terminus, the 128-residue chain is uncharacterized protein (128 aa).

2 disordered regions span residues 62 to 83 (LNPS…SPRV) and 101 to 128 (FAAS…RYQP). The segment covering 101-114 (FAASSSSTAPVTVT) has biased composition (low complexity).

Its subcellular location is the cytoplasm. It is found in the nucleus. This is an uncharacterized protein from Saccharomyces cerevisiae (strain ATCC 204508 / S288c) (Baker's yeast).